Here is a 493-residue protein sequence, read N- to C-terminus: Glutamate--tRNA ligase (493 aa).

Residues 10 to 20 (PSPTGDPHVGT) carry the 'HIGH' region motif. Residues 251–255 (KLSKR) carry the 'KMSKS' region motif. Lys-254 serves as a coordination point for ATP.

This sequence belongs to the class-I aminoacyl-tRNA synthetase family. Glutamate--tRNA ligase type 1 subfamily. Monomer.

The protein localises to the cytoplasm. It carries out the reaction tRNA(Glu) + L-glutamate + ATP = L-glutamyl-tRNA(Glu) + AMP + diphosphate. Catalyzes the attachment of glutamate to tRNA(Glu) in a two-step reaction: glutamate is first activated by ATP to form Glu-AMP and then transferred to the acceptor end of tRNA(Glu). In Pseudomonas putida (strain ATCC 700007 / DSM 6899 / JCM 31910 / BCRC 17059 / LMG 24140 / F1), this protein is Glutamate--tRNA ligase.